The following is a 401-amino-acid chain: 8-amino-7-oxononanoate synthase (401 aa).

Residue arginine 24 coordinates substrate. 111–112 (GF) lines the pyridoxal 5'-phosphate pocket. Substrate is bound at residue histidine 137. The pyridoxal 5'-phosphate site is built by serine 183, histidine 211, and threonine 240. Lysine 243 carries the post-translational modification N6-(pyridoxal phosphate)lysine. A substrate-binding site is contributed by threonine 357.

The protein belongs to the class-II pyridoxal-phosphate-dependent aminotransferase family. BioF subfamily. In terms of assembly, homodimer. It depends on pyridoxal 5'-phosphate as a cofactor.

The catalysed reaction is 6-carboxyhexanoyl-[ACP] + L-alanine + H(+) = (8S)-8-amino-7-oxononanoate + holo-[ACP] + CO2. Its pathway is cofactor biosynthesis; biotin biosynthesis. Catalyzes the decarboxylative condensation of pimeloyl-[acyl-carrier protein] and L-alanine to produce 8-amino-7-oxononanoate (AON), [acyl-carrier protein], and carbon dioxide. The chain is 8-amino-7-oxononanoate synthase from Xanthomonas euvesicatoria pv. vesicatoria (strain 85-10) (Xanthomonas campestris pv. vesicatoria).